The primary structure comprises 258 residues: 5'-nucleotidase SurE (258 aa).

4 residues coordinate a divalent metal cation: Asp9, Asp10, Ser42, and Asn96.

The protein belongs to the SurE nucleotidase family. The cofactor is a divalent metal cation.

It localises to the cytoplasm. It carries out the reaction a ribonucleoside 5'-phosphate + H2O = a ribonucleoside + phosphate. Its function is as follows. Nucleotidase that shows phosphatase activity on nucleoside 5'-monophosphates. The protein is 5'-nucleotidase SurE of Campylobacter jejuni subsp. jejuni serotype O:2 (strain ATCC 700819 / NCTC 11168).